We begin with the raw amino-acid sequence, 333 residues long: Serine/threonine-protein phosphatase PP1-beta (333 aa).

Mn(2+) is bound by residues Asp63, His65, Asp91, and Asn123. His124 functions as the Proton donor in the catalytic mechanism. Mn(2+)-binding residues include His172 and His247. The disordered stretch occupies residues 306–333; the sequence is GAGGVGSNRPVTPPRNAPAAQPKKGAKK. Positions 322-333 are enriched in low complexity; sequence APAAQPKKGAKK.

Belongs to the PPP phosphatase family. PP-1 subfamily. As to quaternary structure, interacts with lab-1; the interaction is direct. Interacts with knl-1; the interaction is direct. Mn(2+) is required as a cofactor.

The protein resides in the cytoplasm. It is found in the nucleus. The catalysed reaction is O-phospho-L-seryl-[protein] + H2O = L-seryl-[protein] + phosphate. It catalyses the reaction O-phospho-L-threonyl-[protein] + H2O = L-threonyl-[protein] + phosphate. Serine/threonine-protein phosphatase essential for chromosomal dynamics during meiosis and mitosis. Antagonizes the function of air-2 in the regulation of chromosome cohesion. Dephosphorylates histone H3 at 'Ser-10'. Also involved in the activation of chloride channel clh-3 during cell swelling and meiotic maturation. Essential for embryogenesis. The protein is Serine/threonine-protein phosphatase PP1-beta (gsp-2) of Caenorhabditis briggsae.